Reading from the N-terminus, the 313-residue chain is Antiviral protein I (313 aa).

Positions 1–22 (MKSMLVVTISIWLILAPTSTWA) are cleaved as a signal peptide. Cystine bridges form between Cys56-Cys281 and Cys107-Cys128. Tyr94 is a catalytic residue. Residue Val95 coordinates substrate. Ser143 provides a ligand contact to substrate. Residue Tyr145 is part of the active site. Ser197 contacts substrate. Residues Glu198 and Arg201 contribute to the active site. Substrate is bound at residue Arg201. Residues 286–313 (NQNAMFPQLIMSTYYNYMVNLGDLFEGF) constitute a propeptide that is removed on maturation.

Belongs to the ribosome-inactivating protein family. Type 1 RIP subfamily. Monomer. As to expression, expressed in spring leaves (at protein level). Expressed in roots (at protein level).

It catalyses the reaction Endohydrolysis of the N-glycosidic bond at one specific adenosine on the 28S rRNA.. Functionally, possesses antiviral potency. Inhibits viral infection of plants (tobacco mosaic virus). Inhibits protein synthesis. Releases both adenine and guanine from Escherichia coli rRNA in vitro. Activity on guanine is 20 times slower than that on adenine. The protein is Antiviral protein I (PAP1) of Phytolacca americana (American pokeweed).